Reading from the N-terminus, the 785-residue chain is Semaphorin-3E (785 aa).

The first 25 residues, 1 to 25, serve as a signal peptide directing secretion; sequence MLGRMASAQDLLILALCGLLLELPA. A Sema domain is found at 36–520; sequence RLRLSHKELW…TESVIAQVKF (485 aa). The N-linked (GlcNAc...) asparagine glycan is linked to N48. Cysteines 109 and 119 form a disulfide. N130 carries an N-linked (GlcNAc...) asparagine glycan. 4 cysteine pairs are disulfide-bonded: C137-C146, C274-C386, C298-C346, and C523-C541. N-linked (GlcNAc...) asparagine glycosylation occurs at N600. Residues 651-740 form the Ig-like C2-type domain; sequence LDAGTYFCQT…EYCEKVWCTD (90 aa). C658 and C733 are disulfide-bonded. The segment at 744-785 is disordered; the sequence is KKLKMSPSKWKYANPQEKRQDQEKKARIRPEHYRLPRNIADS. The segment covering 759–777 has biased composition (basic and acidic residues); sequence QEKRQDQEKKARIRPEHYR.

Belongs to the semaphorin family. In terms of tissue distribution, collapsin-1, -2, -3, and -5 bind to overlapping but distinct axon tracts.

The protein localises to the secreted. Its function is as follows. Plays an important role in signaling via the cell surface receptor PLXND1. Mediates reorganization of the actin cytoskeleton, leading to the retraction of cell projections. Promotes focal adhesion disassembly and inhibits adhesion of endothelial cells to the extracellular matrix. Regulates angiogenesis. Can down-regulate sprouting angiogenesis. Required for normal vascular patterning during embryogenesis. Induces the collapse and paralysis of neuronal growth cones. Plays an important role in ensuring the specificity of synapse formation. The sequence is that of Semaphorin-3E (SEMA3E) from Gallus gallus (Chicken).